The chain runs to 333 residues: D-fructose 1,6-bisphosphatase class 2/sedoheptulose 1,7-bisphosphatase (333 aa).

Positions 33, 57, 85, and 88 each coordinate Mn(2+). Residues 88-90 (EGT), tyrosine 119, 164-166 (RTR), and 186-188 (DGD) contribute to the substrate site. Residue glutamate 213 participates in Mn(2+) binding.

It belongs to the FBPase class 2 family. Homotetramer. Requires Mn(2+) as cofactor.

The catalysed reaction is beta-D-fructose 1,6-bisphosphate + H2O = beta-D-fructose 6-phosphate + phosphate. It carries out the reaction D-sedoheptulose 1,7-bisphosphate + H2O = D-sedoheptulose 7-phosphate + phosphate. The protein operates within carbohydrate biosynthesis; Calvin cycle. In terms of biological role, catalyzes the hydrolysis of fructose 1,6-bisphosphate (Fru 1,6-P2) and sedoheptulose 1,7-bisphosphate (Sed 1,7-P2) to fructose 6-phosphate and sedoheptulose 7-phosphate, respectively. This Prochlorococcus marinus (strain AS9601) protein is D-fructose 1,6-bisphosphatase class 2/sedoheptulose 1,7-bisphosphatase.